Reading from the N-terminus, the 181-residue chain is Thymidine kinase (181 aa).

13-20 is a binding site for ATP; sequence GPMFSGKS. Glu85 serves as the catalytic Proton acceptor. Phe115 is a binding site for substrate. Zn(2+) contacts are provided by Cys140 and Cys143. 159-163 lines the substrate pocket; that stretch reads IEIIG. Zn(2+) is bound by residues Cys172 and Cys175.

Belongs to the thymidine kinase family.

The enzyme catalyses thymidine + ATP = dTMP + ADP + H(+). This is Thymidine kinase (TK) from Yaba monkey tumor virus (strain VR587) (YMTV).